A 795-amino-acid polypeptide reads, in one-letter code: uncharacterized protein (795 aa).

A coiled-coil region spans residues 228–280 (NIICFKNKCKNNEKEKKEEEEDHDHDHDDKKKEKEDKEKEEEEEEEDSNDDFE). Disordered stretches follow at residues 242–278 (EKKE…SNDD), 326–430 (TTTT…TPNR), 455–484 (INQQ…KSEP), and 673–743 (NNNN…NENE). The segment covering 251 to 264 (DHDHDDKKKEKEDK) has biased composition (basic and acidic residues). Over residues 265 to 278 (EKEEEEEEEDSNDD) the composition is skewed to acidic residues. The span at 326–345 (TTTTTVNGSKNSSNTTTPIT) shows a compositional bias: low complexity. The span at 362-373 (DDDDDDDLTDED) shows a compositional bias: acidic residues. Over residues 377–398 (HNEIYSTSPKVSHSTFCQSSPT) the composition is skewed to polar residues. Low complexity-rich tracts occupy residues 399–414 (LLDL…QQQQ), 455–480 (INQQ…SSNI), and 673–729 (NNNN…NQNE). Residues 732–743 (NENKNENENENE) show a composition bias toward basic and acidic residues.

This is an uncharacterized protein from Dictyostelium discoideum (Social amoeba).